The following is a 667-amino-acid chain: Protein-glutamine gamma-glutamyltransferase 4 (667 aa).

N-linked (GlcNAc...) asparagine glycans are attached at residues asparagine 151, asparagine 220, and asparagine 227. Active-site residues include cysteine 256, histidine 315, and aspartate 338. Ca(2+) is bound by residues asparagine 378 and aspartate 380. Asparagine 408 carries an N-linked (GlcNAc...) asparagine glycan. Ca(2+) contacts are provided by glutamate 430 and glutamate 435. The tract at residues 430–449 (EGSPEERKAMEKASGKRPDD) is disordered. N-linked (GlcNAc...) asparagine glycans are attached at residues asparagine 472 and asparagine 488.

It belongs to the transglutaminase superfamily. Transglutaminase family. As to quaternary structure, homodimer. Ca(2+) serves as cofactor. The N-terminus is blocked. In terms of processing, probably linked to the cell membrane via a lipid-anchor, possibly a GPI-anchor. Post-translationally, N-glycosylated on 2 Asn residues by a high mannose oligosaccharide consisting of five mannose residues and a fucosylated biantennary complex glycan. In terms of tissue distribution, expressed in the coagulating gland, the dorsal part of the prostate and in semen (at protein level). Expressed at low levels in the lateral prostate and seminal vesicle. Not expressed in the epididymis, kidney, liver, serum, sperm plug, testes and ventral prostate.

Its subcellular location is the secreted. The protein localises to the cell membrane. It carries out the reaction L-glutaminyl-[protein] + L-lysyl-[protein] = [protein]-L-lysyl-N(6)-5-L-glutamyl-[protein] + NH4(+). In terms of biological role, associated with the mammalian reproductive process. Plays an important role in the formation of the seminal coagulum through the cross-linking of specific proteins present in the seminal plasma. Transglutaminase is also required to stabilize the copulatory plug. The chain is Protein-glutamine gamma-glutamyltransferase 4 (Tgm4) from Rattus norvegicus (Rat).